The primary structure comprises 1492 residues: DNA-directed RNA polymerase subunit beta' (1492 aa).

4 residues coordinate Zn(2+): Cys-67, Cys-69, Cys-82, and Cys-85. Residues Asp-499, Asp-501, and Asp-503 each coordinate Mg(2+). Zn(2+)-binding residues include Cys-867, Cys-943, Cys-950, and Cys-953.

This sequence belongs to the RNA polymerase beta' chain family. The RNAP catalytic core consists of 2 alpha, 1 beta, 1 beta' and 1 omega subunit. When a sigma factor is associated with the core the holoenzyme is formed, which can initiate transcription. Mg(2+) is required as a cofactor. Zn(2+) serves as cofactor.

It catalyses the reaction RNA(n) + a ribonucleoside 5'-triphosphate = RNA(n+1) + diphosphate. In terms of biological role, DNA-dependent RNA polymerase catalyzes the transcription of DNA into RNA using the four ribonucleoside triphosphates as substrates. This Chlorobium phaeobacteroides (strain DSM 266 / SMG 266 / 2430) protein is DNA-directed RNA polymerase subunit beta'.